The chain runs to 149 residues: Transcriptional repressor NrdR (149 aa).

Residues 3–34 fold into a zinc finger; the sequence is CPFCSAVDTKVIDSRLVGEGTQVRRRRQCVIC. One can recognise an ATP-cone domain in the interval 49–139; that stretch reads PRVIKSNDVR…VYRSFEDIRE (91 aa).

It belongs to the NrdR family. The cofactor is Zn(2+).

Functionally, negatively regulates transcription of bacterial ribonucleotide reductase nrd genes and operons by binding to NrdR-boxes. This chain is Transcriptional repressor NrdR, found in Sodalis glossinidius (strain morsitans).